We begin with the raw amino-acid sequence, 83 residues long: Subtilisin-chymotrypsin inhibitor CI-1B (83 aa).

Residues 1–28 (MRSMEGSVPKYPEPTEGSIGASGAKRSW) form a disordered region.

Belongs to the protease inhibitor I13 (potato type I serine protease inhibitor) family.

Its function is as follows. Inhibits both subtilisin and chymotrypsin. The sequence is that of Subtilisin-chymotrypsin inhibitor CI-1B from Hordeum vulgare (Barley).